Reading from the N-terminus, the 330-residue chain is Aspartate--ammonia ligase (330 aa).

It belongs to the class-II aminoacyl-tRNA synthetase family. AsnA subfamily.

It is found in the cytoplasm. It catalyses the reaction L-aspartate + NH4(+) + ATP = L-asparagine + AMP + diphosphate + H(+). It functions in the pathway amino-acid biosynthesis; L-asparagine biosynthesis; L-asparagine from L-aspartate (ammonia route): step 1/1. This Streptococcus pneumoniae serotype 2 (strain D39 / NCTC 7466) protein is Aspartate--ammonia ligase.